A 341-amino-acid chain; its full sequence is Flagellar P-ring protein (341 aa).

Positions 1–19 are cleaved as a signal peptide; that stretch reads MKQVFLWLIFVLAFHKLLA.

It belongs to the FlgI family. The basal body constitutes a major portion of the flagellar organelle and consists of four rings (L,P,S, and M) mounted on a central rod.

The protein localises to the periplasm. It is found in the bacterial flagellum basal body. Functionally, assembles around the rod to form the L-ring and probably protects the motor/basal body from shearing forces during rotation. This is Flagellar P-ring protein from Helicobacter acinonychis (strain Sheeba).